The primary structure comprises 949 residues: Glycine dehydrogenase (decarboxylating) (949 aa).

At Lys-700 the chain carries N6-(pyridoxal phosphate)lysine.

The protein belongs to the GcvP family. The glycine cleavage system is composed of four proteins: P, T, L and H. Requires pyridoxal 5'-phosphate as cofactor.

The catalysed reaction is N(6)-[(R)-lipoyl]-L-lysyl-[glycine-cleavage complex H protein] + glycine + H(+) = N(6)-[(R)-S(8)-aminomethyldihydrolipoyl]-L-lysyl-[glycine-cleavage complex H protein] + CO2. The glycine cleavage system catalyzes the degradation of glycine. The P protein binds the alpha-amino group of glycine through its pyridoxal phosphate cofactor; CO(2) is released and the remaining methylamine moiety is then transferred to the lipoamide cofactor of the H protein. The chain is Glycine dehydrogenase (decarboxylating) from Flavobacterium johnsoniae (strain ATCC 17061 / DSM 2064 / JCM 8514 / BCRC 14874 / CCUG 350202 / NBRC 14942 / NCIMB 11054 / UW101) (Cytophaga johnsonae).